The chain runs to 249 residues: MIT domain-containing protein 1 (249 aa).

The 79-residue stretch at 8 to 86 (QDPQSTAAAT…KYLDQEKEDG (79 aa)) folds into the MIT domain. Residues 168–231 (RGLQEIEESL…SLGYCDFDLR (64 aa)) are important for association with membranes.

Homodimer. Interacts (via MIT domain) with CHMP1A, CHMP1B, CHMP2A and IST1.

The protein resides in the late endosome membrane. It is found in the midbody. It localises to the membrane. In terms of biological role, required for efficient abscission at the end of cytokinesis, together with components of the ESCRT-III complex. This Homo sapiens (Human) protein is MIT domain-containing protein 1 (MITD1).